Consider the following 173-residue polypeptide: Putative phosphoesterase GTNG_0743 (173 aa).

Residue His-34 is the Proton donor of the active site. Short sequence motifs (HXTX) lie at residues 34–37 (HITL) and 115–118 (HITI). His-115 functions as the Proton acceptor in the catalytic mechanism.

This sequence belongs to the 2H phosphoesterase superfamily. YjcG family.

In Geobacillus thermodenitrificans (strain NG80-2), this protein is Putative phosphoesterase GTNG_0743.